Consider the following 442-residue polypeptide: D-serine dehydratase (442 aa).

K118 carries the N6-(pyridoxal phosphate)lysine modification.

This sequence belongs to the serine/threonine dehydratase family. DsdA subfamily. As to quaternary structure, monomer. Pyridoxal 5'-phosphate serves as cofactor.

The catalysed reaction is D-serine = pyruvate + NH4(+). This is D-serine dehydratase from Escherichia coli O139:H28 (strain E24377A / ETEC).